Here is a 277-residue protein sequence, read N- to C-terminus: Phosphate import ATP-binding protein PstB (277 aa).

One can recognise an ABC transporter domain in the interval 31–272; it reads IEVPGLSLFY…PAKKQTEDYI (242 aa). 63-70 is a binding site for ATP; sequence GPSGCGKS.

The protein belongs to the ABC transporter superfamily. Phosphate importer (TC 3.A.1.7) family. In terms of assembly, the complex is composed of two ATP-binding proteins (PstB), two transmembrane proteins (PstC and PstA) and a solute-binding protein (PstS).

The protein localises to the cell inner membrane. The enzyme catalyses phosphate(out) + ATP + H2O = ADP + 2 phosphate(in) + H(+). Its function is as follows. Part of the ABC transporter complex PstSACB involved in phosphate import. Responsible for energy coupling to the transport system. The polypeptide is Phosphate import ATP-binding protein PstB (Pseudomonas fluorescens (strain Pf0-1)).